The sequence spans 222 residues: MIF4G domain-containing protein (222 aa).

The 203-residue stretch at 3 to 205 folds into the MIF4G domain; the sequence is EPSREEYKIQ…LEIIEFRAAG (203 aa).

Belongs to the MIF4GD family. In terms of assembly, interacts with EIF4G1, EIF4G2 and SLBP; probably tethered by SLBP to the 3'-end of mRNAs ending with the histone stem-loop, it also interacts with EIF4G1 which is bound to their 5'-end.

It localises to the cytoplasm. The protein localises to the nucleus. Functionally, functions in replication-dependent translation of histone mRNAs which differ from other eukaryotic mRNAs in that they do not end with a poly-A tail but a stem-loop. May participate in circularizing those mRNAs specifically enhancing their translation. This chain is MIF4G domain-containing protein (MIF4GD), found in Homo sapiens (Human).